A 191-amino-acid chain; its full sequence is GDP-mannose pyrophosphatase (191 aa).

Residues Y17, K38–E40, R67, and A85–L87 contribute to the GDP-alpha-D-mannose site. The Nudix hydrolase domain maps to D43 to L180. Mg(2+) is bound by residues A85, E100, and E104. Positions G86–G106 match the Nudix box motif. Residues E104, E127, D150–E151, and K176 contribute to the GDP-alpha-D-mannose site. Position 151 (E151) interacts with Mg(2+).

This sequence belongs to the Nudix hydrolase family. NudK subfamily. As to quaternary structure, homodimer. Mg(2+) serves as cofactor.

The catalysed reaction is GDP-alpha-D-mannose + H2O = alpha-D-mannose 1-phosphate + GMP + 2 H(+). Functionally, nucleoside diphosphate sugar hydrolase that hydrolyzes GDP-mannose as its preferred substrate, yielding GMP and mannose-1-phosphate. In Salmonella typhi, this protein is GDP-mannose pyrophosphatase (nudK).